A 352-amino-acid polypeptide reads, in one-letter code: UDP-N-acetylglucosamine--N-acetylmuramyl-(pentapeptide) pyrophosphoryl-undecaprenol N-acetylglucosamine transferase (352 aa).

Residues Ser195 and Gln287 each coordinate UDP-N-acetyl-alpha-D-glucosamine.

The protein belongs to the glycosyltransferase 28 family. MurG subfamily.

The protein resides in the cell membrane. It catalyses the reaction Mur2Ac(oyl-L-Ala-gamma-D-Glu-L-Lys-D-Ala-D-Ala)-di-trans,octa-cis-undecaprenyl diphosphate + UDP-N-acetyl-alpha-D-glucosamine = beta-D-GlcNAc-(1-&gt;4)-Mur2Ac(oyl-L-Ala-gamma-D-Glu-L-Lys-D-Ala-D-Ala)-di-trans,octa-cis-undecaprenyl diphosphate + UDP + H(+). It functions in the pathway cell wall biogenesis; peptidoglycan biosynthesis. Cell wall formation. Catalyzes the transfer of a GlcNAc subunit on undecaprenyl-pyrophosphoryl-MurNAc-pentapeptide (lipid intermediate I) to form undecaprenyl-pyrophosphoryl-MurNAc-(pentapeptide)GlcNAc (lipid intermediate II). The protein is UDP-N-acetylglucosamine--N-acetylmuramyl-(pentapeptide) pyrophosphoryl-undecaprenol N-acetylglucosamine transferase of Streptococcus pneumoniae serotype 4 (strain ATCC BAA-334 / TIGR4).